Reading from the N-terminus, the 360-residue chain is sn-glycerol-3-phosphate import ATP-binding protein UgpC (360 aa).

Residues 4-235 enclose the ABC transporter domain; that stretch reads LSLKGVRKSY…PATTFVASFI (232 aa). Residue 37–44 participates in ATP binding; sequence GPSGCGKS.

This sequence belongs to the ABC transporter superfamily. sn-glycerol-3-phosphate importer (TC 3.A.1.1.3) family. As to quaternary structure, the complex is composed of two ATP-binding proteins (UgpC), two transmembrane proteins (UgpA and UgpE) and a solute-binding protein (UgpB).

The protein localises to the cell inner membrane. It catalyses the reaction sn-glycerol 3-phosphate(out) + ATP + H2O = sn-glycerol 3-phosphate(in) + ADP + phosphate + H(+). Its function is as follows. Part of the ABC transporter complex UgpBAEC involved in sn-glycerol-3-phosphate (G3P) import. Responsible for energy coupling to the transport system. This is sn-glycerol-3-phosphate import ATP-binding protein UgpC from Burkholderia pseudomallei (strain K96243).